The chain runs to 530 residues: Ankyrin repeat domain-containing protein 53 (530 aa).

Over residues 1-15 (MASAGSTARRAGSGS) the composition is skewed to low complexity. The disordered stretch occupies residues 1–99 (MASAGSTARR…PSPSKESDQT (99 aa)). Residues 32 to 41 (PSGSMQQANK) show a composition bias toward polar residues. 3 ANK repeats span residues 139–169 (KGFTAIHFAAQWGKLACLQVLVEEYKFPVDL), 173–206 (NSQTPLHLVIHRDNTTVALPCIYYLLEKGADLNA), and 210–239 (NGSTPLHLAARDGLLDCVKVLVQSGANVHA). Disordered stretches follow at residues 323–360 (GHSLVSNTKQARATALSKTPEQRESQRSRSFHPSVDAR) and 383–402 (PTMWNVSNNPARPPTTQISH). Composition is skewed to polar residues over residues 326–341 (LVSNTKQARATALSKT) and 386–402 (WNVSNNPARPPTTQISH).

As to quaternary structure, interacts with PSRC1; recruited by PSRC1 to the spindle during mitosis. In terms of processing, phosphorylated during mitosis.

It is found in the cytoplasm. Its subcellular location is the cytoskeleton. It localises to the spindle. The protein localises to the spindle pole. Required for normal progression through mitosis. Involved in chromosome alignment and cytokinesis via regulation of microtubules polymerization. The polypeptide is Ankyrin repeat domain-containing protein 53 (ANKRD53) (Homo sapiens (Human)).